We begin with the raw amino-acid sequence, 183 residues long: ATP synthase subunit delta, chloroplastic (183 aa).

The protein belongs to the ATPase delta chain family. In terms of assembly, F-type ATPases have 2 components, F(1) - the catalytic core - and F(0) - the membrane proton channel. F(1) has five subunits: alpha(3), beta(3), gamma(1), delta(1), epsilon(1). CF(0) has four main subunits: a(1), b(1), b'(1) and c(10-14). The alpha and beta chains form an alternating ring which encloses part of the gamma chain. F(1) is attached to F(0) by a central stalk formed by the gamma and epsilon chains, while a peripheral stalk is formed by the delta, b and b' chains.

Its subcellular location is the plastid. The protein resides in the chloroplast thylakoid membrane. Its function is as follows. F(1)F(0) ATP synthase produces ATP from ADP in the presence of a proton or sodium gradient. F-type ATPases consist of two structural domains, F(1) containing the extramembraneous catalytic core and F(0) containing the membrane proton channel, linked together by a central stalk and a peripheral stalk. During catalysis, ATP synthesis in the catalytic domain of F(1) is coupled via a rotary mechanism of the central stalk subunits to proton translocation. This protein is part of the stalk that links CF(0) to CF(1). It either transmits conformational changes from CF(0) to CF(1) or is implicated in proton conduction. In Cyanidium caldarium (Red alga), this protein is ATP synthase subunit delta, chloroplastic.